A 199-amino-acid chain; its full sequence is MRLTAKQITWLKVILHLAGLLPFIWLFWAASQGYFSADPAKDIQHFTGRMALKFLLASLLISPLARYAKQPLLIRTRRLLGLWCFAWATLHLTSYALLELGINNLALLGSELISRPYLTLGIVSWVILFALTLTSTQYAQRKLGRRWQFLHNFVYLVAILTPIHYLWSVKILSPQPVIYALLALGLLAWRYKKFRQWWR.

5 helical membrane passes run 8–28, 82–102, 116–136, 149–169, and 171–191; these read ITWL…WLFW, LWCF…ELGI, PYLT…LTST, FLHN…LWSV, and ILSP…AWRY.

The protein belongs to the MsrQ family. As to quaternary structure, heterodimer of a catalytic subunit (MsrP) and a heme-binding subunit (MsrQ). FMN serves as cofactor. The cofactor is heme b.

Its subcellular location is the cell inner membrane. In terms of biological role, part of the MsrPQ system that repairs oxidized periplasmic proteins containing methionine sulfoxide residues (Met-O), using respiratory chain electrons. Thus protects these proteins from oxidative-stress damage caused by reactive species of oxygen and chlorine generated by the host defense mechanisms. MsrPQ is essential for the maintenance of envelope integrity under bleach stress, rescuing a wide series of structurally unrelated periplasmic proteins from methionine oxidation. MsrQ provides electrons for reduction to the reductase catalytic subunit MsrP, using the quinone pool of the respiratory chain. The polypeptide is Protein-methionine-sulfoxide reductase heme-binding subunit MsrQ (Enterobacter sp. (strain 638)).